The sequence spans 306 residues: Tricarboxylate transporter FUM11 (306 aa).

Solcar repeat units lie at residues 18-98 (SDTL…YQKL), 109-195 (FGIL…LKQV), and 206-292 (IGTV…VVEG). 6 consecutive transmembrane segments (helical) span residues 24–44 (LVAG…AEFA), 67–87 (GLQW…KTSI), 113–133 (LAGF…SERI), 170–189 (GFWP…LGSY), 209–229 (VKTF…TQPL), and 267–286 (GAVA…FMVY).

This sequence belongs to the mitochondrial carrier (TC 2.A.29) family.

The protein localises to the mitochondrion inner membrane. It participates in mycotoxin biosynthesis. Tricarboxylate transporter; part of the gene cluster that mediates the biosynthesis of fumonisins B1 (FB1), B2 (FB2), B3 (FB3), and B4 (FB4), which are carcinogenic mycotoxins. Within the pathway, FUM11 is involved the addition of the tricarballylic moieties to the carbon backbone. FUM11 makes a tricarboxylic acid precursor available for fumonisin biosynthesis via its export from the mitochondria. The biosynthesis starts with the FUM1-catalyzed carbon chain assembly from one molecule of acetyl-CoA, eight molecules of malonyl-CoA, and two molecules of methionine (in S-adenosyl form). The C18 polyketide chain is released from the enzyme by a nucleophilic attack of a carbanion, which is derived from R-carbon of alanine by decarboxylation, on the carbonyl carbon of polyketide acyl chain. This step is catalyzed by the pyridoxal 5'-phosphate-dependent aminoacyl transferase FUM8. The resultant 3-keto intermediate is then stereospecifically reduced to a 3-hydroxyl product by reductase FUM13. Subsequent oxidations at C-10 by the cytochrome P450 monooxygenase FUM2, C-14 and C-15 by FUM6, FUM12 or FUM15, tricarballylic esterification of the hydroxyl groups on C-14 and C-15 by acyltransferase FUM14, and C-5 hydroxylation by 2-keto-glutarate-dependent dioxygenase FUM3 furnish the biosynthesis of fumonisins. The tricarballylic moieties are most likely derived from the citric acid cycle, and their addition to the carbon backbone may involve FUM7, FUM10, FUM11 and FUM14. The protein is Tricarboxylate transporter FUM11 of Gibberella moniliformis (strain M3125 / FGSC 7600) (Maize ear and stalk rot fungus).